A 352-amino-acid chain; its full sequence is Ribosomal RNA large subunit methyltransferase M (352 aa).

Residues serine 184, 217-220, aspartate 236, aspartate 256, and aspartate 272 contribute to the S-adenosyl-L-methionine site; that span reads APGG. Lysine 301 serves as the catalytic Proton acceptor.

Belongs to the class I-like SAM-binding methyltransferase superfamily. RNA methyltransferase RlmE family. RlmM subfamily. In terms of assembly, monomer.

It localises to the cytoplasm. The enzyme catalyses cytidine(2498) in 23S rRNA + S-adenosyl-L-methionine = 2'-O-methylcytidine(2498) in 23S rRNA + S-adenosyl-L-homocysteine + H(+). Its function is as follows. Catalyzes the 2'-O-methylation at nucleotide C2498 in 23S rRNA. The polypeptide is Ribosomal RNA large subunit methyltransferase M (Pseudomonas aeruginosa (strain UCBPP-PA14)).